The chain runs to 1377 residues: DNA-directed RNA polymerase subunit beta' (1377 aa).

Zn(2+) is bound by residues cysteine 60, cysteine 62, cysteine 75, and cysteine 78. Positions 449, 451, and 453 each coordinate Mg(2+). Residues cysteine 777, cysteine 851, cysteine 858, and cysteine 861 each contribute to the Zn(2+) site.

The protein belongs to the RNA polymerase beta' chain family. In terms of assembly, the RNAP catalytic core consists of 2 alpha, 1 beta, 1 beta' and 1 omega subunit. When a sigma factor is associated with the core the holoenzyme is formed, which can initiate transcription. Requires Mg(2+) as cofactor. Zn(2+) is required as a cofactor.

The enzyme catalyses RNA(n) + a ribonucleoside 5'-triphosphate = RNA(n+1) + diphosphate. In terms of biological role, DNA-dependent RNA polymerase catalyzes the transcription of DNA into RNA using the four ribonucleoside triphosphates as substrates. The chain is DNA-directed RNA polymerase subunit beta' from Borrelia turicatae (strain 91E135).